A 425-amino-acid chain; its full sequence is Intermediate conductance calcium-activated potassium channel protein 4 (425 aa).

A helical membrane pass occupies residues 30 to 50; it reads LVLAGTGIGLMVLHAEMLWFL. A helical membrane pass occupies residues 59 to 79; that stretch reads LLVKCLITLSTAFLLCLIVVF. The chain crosses the membrane as a helical span at residues 105–121; that stretch reads VAQILLELLVCGVHPVP. The helical transmembrane segment at 141-161 threads the bilayer; that stretch reads GFLGEGEALLSLAMLLRLYLV. The helical transmembrane segment at 205–225 threads the bilayer; the sequence is LLLGLTLGLWLTTAWVLSVAE. An intramembrane region (pore-forming) is located at residues 239–259; it reads LWLIPITFLTIGYGDVVPGTL. Residues 263 to 283 form a helical membrane-spanning segment; the sequence is IVCLCTGVMGVCCTALLVAVV. Residues 284–345 are calmodulin-binding; it reads ARKLEFNKAE…RRHQRKMLAA (62 aa). Histidine 356 is subject to Phosphohistidine.

The protein belongs to the potassium channel KCNN family. KCa3.1/KCNN4 subfamily. Homodimer. Homotetramer. Heterotetramer of potassium channel proteins. Interacts with MTMR6; this interaction leads to selective dephosphorylation of PI(3)P in a lipid microdomain adjacent to KCNN4, resulting in a decrease of intermediate conductance calcium-activated potassium channel activity. Interacts (via the C-tail domain) with CALM1; the calmodulin binding is constitutive, does not require calcium and mediates calcium-dependent gating and four calmodulin molecules bind to one channel tetramer. In terms of processing, phosphorylation at His-356 by NDKB activates the intermediate conductance calcium-activated potassium channel activity, and conversely it's dephosphorylation by PHPT1 inhibits this activity.

The protein resides in the cell membrane. Its subcellular location is the cell projection. It localises to the ruffle membrane. The enzyme catalyses K(+)(in) = K(+)(out). Functionally, intermediate conductance calcium-activated potassium channel that mediates the voltage-independent transmembrane transfer of potassium across the cell membrane through a constitutive interaction with calmodulin which binds the intracellular calcium allowing its opening. The current is characterized by a voltage-independent activation, an intracellular calcium concentration increase-dependent activation and a single-channel conductance of about 25 picosiemens. Also presents an inwardly rectifying current, thus reducing its already small outward conductance of potassium ions, which is particularly the case when the membrane potential displays positive values, above + 20 mV. Controls calcium influx during vascular contractility by being responsible of membrane hyperpolarization induced by vasoactive factors in proliferative vascular smooth muscle cell types. Following calcium influx, the consecutive activation of KCNN4 channel leads to a hyperpolarization of the cell membrane potential and hence an increase of the electrical driving force for further calcium influx promoting sustained calcium entry in response to stimulation with chemotactic peptides. Required for maximal calcium influx and proliferation during the reactivation of naive T-cells. Plays a role in the late stages of EGF-induced macropinocytosis through activation by PI(3)P. This chain is Intermediate conductance calcium-activated potassium channel protein 4, found in Rattus norvegicus (Rat).